The sequence spans 156 residues: Protein CURVATURE THYLAKOID 1C, chloroplastic (156 aa).

The N-terminal 55 residues, 1–55 (MASISATLPSPLLLTQRKSNLTSIQKLPFSLTRGTNDLSPLSLTRNPSSISLMVK), are a transit peptide targeting the chloroplast. The Stromal portion of the chain corresponds to 56–83 (ASGESSDSSTDLDVVSTIQNVWDKSEDR). A helical membrane pass occupies residues 84–104 (LGLIGLGFAGIVALWASLNLI). Residues 105 to 109 (TAIDK) are Lumenal-facing. A helical transmembrane segment spans residues 110–130 (LPVISSGFELVGILFSTWFTY). Topologically, residues 131-156 (RYLLFKPDRQELSKIVKKSVADILGQ) are stromal.

It belongs to the CURT family. As to quaternary structure, homo- and heterodimers and trimers. Interacts with PSAD2.

It is found in the plastid. The protein resides in the chloroplast thylakoid membrane. In terms of biological role, determines thylakoid architecture by inducing membrane curvature. The sequence is that of Protein CURVATURE THYLAKOID 1C, chloroplastic (CURT1C) from Arabidopsis thaliana (Mouse-ear cress).